Here is a 325-residue protein sequence, read N- to C-terminus: Elongation factor P--(R)-beta-lysine ligase (325 aa).

76–78 lines the substrate pocket; it reads SPE. Residues 100–102 and N109 each bind ATP; that span reads RNE. Substrate is bound at residue Y118. 244 to 245 serves as a coordination point for ATP; the sequence is EL. Position 251 (E251) interacts with substrate. G300 contacts ATP.

Belongs to the class-II aminoacyl-tRNA synthetase family. EpmA subfamily. In terms of assembly, homodimer.

It catalyses the reaction D-beta-lysine + L-lysyl-[protein] + ATP = N(6)-((3R)-3,6-diaminohexanoyl)-L-lysyl-[protein] + AMP + diphosphate + H(+). With EpmB is involved in the beta-lysylation step of the post-translational modification of translation elongation factor P (EF-P). Catalyzes the ATP-dependent activation of (R)-beta-lysine produced by EpmB, forming a lysyl-adenylate, from which the beta-lysyl moiety is then transferred to the epsilon-amino group of a conserved specific lysine residue in EF-P. This chain is Elongation factor P--(R)-beta-lysine ligase, found in Yersinia enterocolitica serotype O:8 / biotype 1B (strain NCTC 13174 / 8081).